The chain runs to 130 residues: Small ribosomal subunit protein uS8 (130 aa).

It belongs to the universal ribosomal protein uS8 family. Part of the 30S ribosomal subunit. Contacts proteins S5 and S12.

One of the primary rRNA binding proteins, it binds directly to 16S rRNA central domain where it helps coordinate assembly of the platform of the 30S subunit. The sequence is that of Small ribosomal subunit protein uS8 from Buchnera aphidicola subsp. Baizongia pistaciae (strain Bp).